Reading from the N-terminus, the 137-residue chain is Histone H2B (137 aa).

Residues 1–10 are compositionally biased toward basic and acidic residues; sequence MPPKAADKKP. The tract at residues 1 to 45 is disordered; the sequence is MPPKAADKKPASKAPATASKAPEKKDAGKKTAASGDKKKRTKTRK. Residues K8 and K9 each carry the N6-acetyllysine; alternate modification. Residues K8 and K9 each participate in a glycyl lysine isopeptide (Lys-Gly) (interchain with G-Cter in SUMO); alternate cross-link. The residue at position 12 (S12) is a Phosphoserine. At K13 the chain carries N6-acetyllysine. K24 carries the post-translational modification N6-acetyllysine; alternate. A Glycyl lysine isopeptide (Lys-Gly) (interchain with G-Cter in SUMO); alternate cross-link involves residue K24. Residue K25 forms a Glycyl lysine isopeptide (Lys-Gly) (interchain with G-Cter in SUMO) linkage. A Glycyl lysine isopeptide (Lys-Gly) (interchain with G-Cter in ubiquitin) cross-link involves residue K131.

Belongs to the histone H2B family. As to quaternary structure, the nucleosome is a histone octamer containing two molecules each of H2A, H2B, H3 and H4 assembled in one H3-H4 heterotetramer and two H2A-H2B heterodimers. The octamer wraps approximately 147 bp of DNA. In terms of processing, monoubiquitinated by the UBC2-BRE1 complex to form H2BK123ub1. H2BK123ub1 gives a specific tag for epigenetic transcriptional activation and is also prerequisite for H3K4me and H3K79me formation. H2BK123ub1 also modulates the formation of double-strand breaks during meiosis and is a prerequisite for DNA-damage checkpoint activation. Phosphorylated by STE20 to form H2BS10ph during progression through meiotic prophase. May be correlated with chromosome condensation. Post-translationally, acetylated by GCN5 to form H2BK11ac and H2BK16ac. H2BK16ac can also be formed by ESA1. Acetylation of N-terminal lysines and particularly formation of H2BK11acK16ac has a positive effect on transcription. In terms of processing, sumoylation to form H2BK6su or H2BK7su, and probably also H2BK16su or H2BK17su, occurs preferentially near the telomeres and represses gene transcription.

The protein localises to the nucleus. It is found in the chromosome. Its function is as follows. Core component of nucleosome. Nucleosomes wrap and compact DNA into chromatin, limiting DNA accessibility to the cellular machineries which require DNA as a template. Histones thereby play a central role in transcription regulation, DNA repair, DNA replication and chromosomal stability. DNA accessibility is regulated via a complex set of post-translational modifications of histones, also called histone code, and nucleosome remodeling. This Pyricularia oryzae (strain Y34) (Rice blast fungus) protein is Histone H2B (HTB1).